Consider the following 387-residue polypeptide: Exodeoxyribonuclease 7 large subunit (387 aa).

Belongs to the XseA family. In terms of assembly, heterooligomer composed of large and small subunits.

It localises to the cytoplasm. The catalysed reaction is Exonucleolytic cleavage in either 5'- to 3'- or 3'- to 5'-direction to yield nucleoside 5'-phosphates.. In terms of biological role, bidirectionally degrades single-stranded DNA into large acid-insoluble oligonucleotides, which are then degraded further into small acid-soluble oligonucleotides. The sequence is that of Exodeoxyribonuclease 7 large subunit from Campylobacter jejuni subsp. jejuni serotype O:2 (strain ATCC 700819 / NCTC 11168).